We begin with the raw amino-acid sequence, 122 residues long: Basic phospholipase A2 homolog Gln49-PLA2 (122 aa).

Cystine bridges form between cysteine 26–cysteine 115, cysteine 28–cysteine 44, cysteine 43–cysteine 95, cysteine 49–cysteine 122, cysteine 50–cysteine 88, cysteine 57–cysteine 81, and cysteine 75–cysteine 86.

This sequence belongs to the phospholipase A2 family. Group II subfamily. Q49 sub-subfamily. Monomer. As to expression, expressed by the venom gland.

It is found in the secreted. Functionally, snake venom phospholipase A2 (PLA2) homolog that shows local myotoxicity, apparent anticoagulant activity, and neurotoxicity. Shows analgesic effect on mice due to a decrease of action potentials and nerve conduction velocity. These effects are caused by inhibition of voltage-gated ion channels (potassium (Kv) and sodium (Nav)). In addition, analgesic effects are antagonized by naloxone, implying the mechanism of action is correlated with opioid receptors (probably indirectly). Does not show detectable PLA2 activity on egg yolk phospholipids. In Gloydius ussuriensis (Ussuri mamushi), this protein is Basic phospholipase A2 homolog Gln49-PLA2.